Consider the following 210-residue polypeptide: NAD(P)H-hydrate epimerase (210 aa).

The region spanning 11-210 (AHNFDDYTIN…TVADIGIYEP (200 aa)) is the YjeF N-terminal domain. 60-64 (NNGGD) provides a ligand contact to (6S)-NADPHX. K(+)-binding residues include N61 and D123. (6S)-NADPHX is bound by residues 127-133 (GVGLSRD) and D156. K(+) is bound at residue T159.

It belongs to the NnrE/AIBP family. The cofactor is K(+).

It carries out the reaction (6R)-NADHX = (6S)-NADHX. The catalysed reaction is (6R)-NADPHX = (6S)-NADPHX. Its function is as follows. Catalyzes the epimerization of the S- and R-forms of NAD(P)HX, a damaged form of NAD(P)H that is a result of enzymatic or heat-dependent hydration. This is a prerequisite for the S-specific NAD(P)H-hydrate dehydratase to allow the repair of both epimers of NAD(P)HX. In Oenococcus oeni (strain ATCC BAA-331 / PSU-1), this protein is NAD(P)H-hydrate epimerase.